A 309-amino-acid polypeptide reads, in one-letter code: Curved DNA-binding protein (309 aa).

The J domain maps to 5-69; the sequence is DYYAILGVKP…ERRAEYDQLR (65 aa).

It is found in the cytoplasm. The protein resides in the nucleoid. DNA-binding protein that preferentially recognizes a curved DNA sequence. It is probably a functional analog of DnaJ; displays overlapping activities with DnaJ, but functions under different conditions, probably acting as a molecular chaperone in an adaptive response to environmental stresses other than heat shock. Lacks autonomous chaperone activity; binds native substrates and targets them for recognition by DnaK. Its activity is inhibited by the binding of CbpM. The polypeptide is Curved DNA-binding protein (Serratia proteamaculans (strain 568)).